The chain runs to 116 residues: Distal membrane-arm assembly complex protein 1 (116 aa).

A disordered region spans residues 1–39 (MGSRLSQPFESYITAPPGTAAAPAKPAPPATPGAPTSPA). Residues 14–24 (TAPPGTAAAPA) show a composition bias toward low complexity. 2 helical membrane-spanning segments follow: residues 52–69 (VLSG…YWVA) and 82–104 (WTIT…GIVV).

In terms of assembly, interacts with incompletely assembled mitochondrial NADH:ubiquinone oxidoreductase complex (complex I).

Its subcellular location is the mitochondrion inner membrane. In terms of biological role, required for the assembly of the mitochondrial NADH:ubiquinone oxidoreductase complex (complex I). Involved in the assembly of the distal region of complex I. The chain is Distal membrane-arm assembly complex protein 1 from Homo sapiens (Human).